Here is a 110-residue protein sequence, read N- to C-terminus: Small ribosomal subunit protein bS16 (110 aa).

The tract at residues 79–110 (AAGVKKREARNNPQKAVPRKERKAQAEAAAKG) is disordered.

It belongs to the bacterial ribosomal protein bS16 family.

This chain is Small ribosomal subunit protein bS16, found in Bradyrhizobium diazoefficiens (strain JCM 10833 / BCRC 13528 / IAM 13628 / NBRC 14792 / USDA 110).